Here is a 245-residue protein sequence, read N- to C-terminus: Biosynthetic peptidoglycan transglycosylase (245 aa).

The helical transmembrane segment at 29-49 (IVLAVLIVLILPYALIVFYLL) threads the bilayer.

This sequence belongs to the glycosyltransferase 51 family.

The protein resides in the cell inner membrane. It carries out the reaction [GlcNAc-(1-&gt;4)-Mur2Ac(oyl-L-Ala-gamma-D-Glu-L-Lys-D-Ala-D-Ala)](n)-di-trans,octa-cis-undecaprenyl diphosphate + beta-D-GlcNAc-(1-&gt;4)-Mur2Ac(oyl-L-Ala-gamma-D-Glu-L-Lys-D-Ala-D-Ala)-di-trans,octa-cis-undecaprenyl diphosphate = [GlcNAc-(1-&gt;4)-Mur2Ac(oyl-L-Ala-gamma-D-Glu-L-Lys-D-Ala-D-Ala)](n+1)-di-trans,octa-cis-undecaprenyl diphosphate + di-trans,octa-cis-undecaprenyl diphosphate + H(+). The protein operates within cell wall biogenesis; peptidoglycan biosynthesis. Functionally, peptidoglycan polymerase that catalyzes glycan chain elongation from lipid-linked precursors. The chain is Biosynthetic peptidoglycan transglycosylase from Rhizobium johnstonii (strain DSM 114642 / LMG 32736 / 3841) (Rhizobium leguminosarum bv. viciae).